Reading from the N-terminus, the 1051-residue chain is Probable valine--tRNA ligase, mitochondrial (1051 aa).

A mitochondrion-targeting transit peptide spans 1-20 (MNKLLFLSKKSSTSNLYRFY). The 'HIGH' region motif lies at 71–81 (PNVTGSLHIGH). A 'KMSKS' region motif is present at residues 606-610 (KMSKS). Lys609 lines the ATP pocket. A coiled-coil region spans residues 972–1019 (KELQISIEFDKEINNQLNQKLINPNQSNDKKILKLENFIKQLQDEIDN).

Belongs to the class-I aminoacyl-tRNA synthetase family.

The protein localises to the mitochondrion. The enzyme catalyses tRNA(Val) + L-valine + ATP = L-valyl-tRNA(Val) + AMP + diphosphate. This chain is Probable valine--tRNA ligase, mitochondrial (valS2), found in Dictyostelium discoideum (Social amoeba).